The following is a 276-amino-acid chain: uncharacterized protein (276 aa).

This is an uncharacterized protein from Methanocaldococcus jannaschii (strain ATCC 43067 / DSM 2661 / JAL-1 / JCM 10045 / NBRC 100440) (Methanococcus jannaschii).